The primary structure comprises 126 residues: Small ribosomal subunit protein uS13 (126 aa).

The segment at 95 to 126 (GLPVRGQRTHTNARTRKGPRKTVAGKKKPGKK) is disordered.

Belongs to the universal ribosomal protein uS13 family. In terms of assembly, part of the 30S ribosomal subunit. Forms a loose heterodimer with protein S19. Forms two bridges to the 50S subunit in the 70S ribosome.

Its function is as follows. Located at the top of the head of the 30S subunit, it contacts several helices of the 16S rRNA. In the 70S ribosome it contacts the 23S rRNA (bridge B1a) and protein L5 of the 50S subunit (bridge B1b), connecting the 2 subunits; these bridges are implicated in subunit movement. Contacts the tRNAs in the A and P-sites. The polypeptide is Small ribosomal subunit protein uS13 (Acidothermus cellulolyticus (strain ATCC 43068 / DSM 8971 / 11B)).